A 686-amino-acid chain; its full sequence is 3',5'-cyclic-AMP phosphodiesterase 4C (686 aa).

Residues S9, S28, S40, and S83 each carry the phosphoserine modification. Disordered regions lie at residues N88–V116 and Y124–A143. Residues Y124–S133 are compositionally biased toward basic and acidic residues. In terms of domain architecture, PDEase spans V313–S642. H389 (proton donor) is an active-site residue. Residue H389 coordinates 3',5'-cyclic AMP. AMP contacts are provided by H389 and H393. The Zn(2+) site is built by H393, H429, D430, and D547. AMP-binding residues include D430, D547, Q598, and F601. Mg(2+) is bound at residue D430. D430 is a binding site for Mn(2+). 3',5'-cyclic AMP-binding residues include Q598 and F601. A Phosphoserine modification is found at S642. A compositionally biased stretch (acidic residues) spans E660–G671. Residues E660–T686 are disordered. The segment covering T674–T686 has biased composition (polar residues).

Belongs to the cyclic nucleotide phosphodiesterase family. PDE4 subfamily. As to quaternary structure, part of a complex containing AKAP5, ADCY5, ADCY6 and PKD2. It depends on Zn(2+) as a cofactor. Mg(2+) is required as a cofactor. Requires Mn(2+) as cofactor.

The protein resides in the cell projection. It localises to the cilium. It carries out the reaction 3',5'-cyclic AMP + H2O = AMP + H(+). It functions in the pathway purine metabolism; 3',5'-cyclic AMP degradation; AMP from 3',5'-cyclic AMP: step 1/1. Hydrolyzes the second messenger cAMP, which is a key regulator of many important physiological processes. In Mus musculus (Mouse), this protein is 3',5'-cyclic-AMP phosphodiesterase 4C.